The primary structure comprises 99 residues: Acylphosphatase-2 (99 aa).

Ser-2 is modified (N-acetylserine). Positions 9–99 (SVDYEVFGRV…LEYSNFSIRY (91 aa)) constitute an Acylphosphatase-like domain. Active-site residues include Arg-24 and Asn-42. At Ser-93 the chain carries Phosphoserine.

The protein belongs to the acylphosphatase family.

It carries out the reaction an acyl phosphate + H2O = a carboxylate + phosphate + H(+). Its function is as follows. Its physiological role is not yet clear. In Cavia porcellus (Guinea pig), this protein is Acylphosphatase-2 (ACYP2).